We begin with the raw amino-acid sequence, 334 residues long: Protein-methionine-sulfoxide reductase catalytic subunit MsrP (334 aa).

A signal peptide (tat-type signal) is located at residues 1–44 (MKKIRPLTEADVTAESAFFMQRRQVLKALGISAAALSLPSTAQA). Mo-molybdopterin contacts are provided by residues N88, 91–92 (YE), C146, T181, N233, R238, and 249–251 (GIK).

This sequence belongs to the MsrP family. Heterodimer of a catalytic subunit (MsrP) and a heme-binding subunit (MsrQ). Mo-molybdopterin is required as a cofactor. Predicted to be exported by the Tat system. The position of the signal peptide cleavage has not been experimentally proven.

It localises to the periplasm. It catalyses the reaction L-methionyl-[protein] + a quinone + H2O = L-methionyl-(S)-S-oxide-[protein] + a quinol. It carries out the reaction L-methionyl-[protein] + a quinone + H2O = L-methionyl-(R)-S-oxide-[protein] + a quinol. Part of the MsrPQ system that repairs oxidized periplasmic proteins containing methionine sulfoxide residues (Met-O), using respiratory chain electrons. Thus protects these proteins from oxidative-stress damage caused by reactive species of oxygen and chlorine generated by the host defense mechanisms. MsrPQ is essential for the maintenance of envelope integrity under bleach stress, rescuing a wide series of structurally unrelated periplasmic proteins from methionine oxidation, including the primary periplasmic chaperone SurA and the lipoprotein Pal. The catalytic subunit MsrP is non-stereospecific, being able to reduce both (R-) and (S-) diastereoisomers of methionine sulfoxide. The chain is Protein-methionine-sulfoxide reductase catalytic subunit MsrP from Salmonella arizonae (strain ATCC BAA-731 / CDC346-86 / RSK2980).